Consider the following 916-residue polypeptide: Protein translocase subunit SecA (916 aa).

ATP-binding positions include Gln87, 105–109 (GEGKT), and Asp507. Zn(2+) contacts are provided by Cys900, Cys902, Cys911, and His912.

It belongs to the SecA family. As to quaternary structure, monomer and homodimer. Part of the essential Sec protein translocation apparatus which comprises SecA, SecYEG and auxiliary proteins SecDF-YajC and YidC. It depends on Zn(2+) as a cofactor.

Its subcellular location is the cell inner membrane. The protein localises to the cytoplasm. It catalyses the reaction ATP + H2O + cellular proteinSide 1 = ADP + phosphate + cellular proteinSide 2.. Functionally, part of the Sec protein translocase complex. Interacts with the SecYEG preprotein conducting channel. Has a central role in coupling the hydrolysis of ATP to the transfer of proteins into and across the cell membrane, serving both as a receptor for the preprotein-SecB complex and as an ATP-driven molecular motor driving the stepwise translocation of polypeptide chains across the membrane. This chain is Protein translocase subunit SecA, found in Neisseria gonorrhoeae (strain ATCC 700825 / FA 1090).